Reading from the N-terminus, the 185-residue chain is Ribosome-recycling factor (185 aa).

The protein belongs to the RRF family.

It localises to the cytoplasm. Its function is as follows. Responsible for the release of ribosomes from messenger RNA at the termination of protein biosynthesis. May increase the efficiency of translation by recycling ribosomes from one round of translation to another. This Azotobacter vinelandii (strain DJ / ATCC BAA-1303) protein is Ribosome-recycling factor.